The sequence spans 434 residues: Probable carboxypeptidase BDCG_03757 (434 aa).

The N-terminal stretch at 1-20 (MKLSHLAAALSAQLVAPVAA) is a signal peptide. 2 N-linked (GlcNAc...) asparagine glycosylation sites follow: Asn136 and Asn150. Asp160 contributes to the Zn(2+) binding site. The active-site Proton acceptor is Glu192. Glu193 provides a ligand contact to Zn(2+). A glycan (N-linked (GlcNAc...) asparagine) is linked at Asn343.

The protein belongs to the peptidase M20A family. Zn(2+) is required as a cofactor.

It is found in the secreted. The polypeptide is Probable carboxypeptidase BDCG_03757 (Ajellomyces dermatitidis (strain ER-3 / ATCC MYA-2586) (Blastomyces dermatitidis)).